The sequence spans 290 residues: Pyridoxal kinase PdxY (290 aa).

Residues S12 and 47 to 48 each bind substrate; that span reads TQ. ATP is bound by residues D114, E151, K184, and 211 to 214; that span reads RPLL. Residue D225 coordinates substrate.

The protein belongs to the pyridoxine kinase family. PdxY subfamily. In terms of assembly, homodimer. Requires Mg(2+) as cofactor.

The enzyme catalyses pyridoxal + ATP = pyridoxal 5'-phosphate + ADP + H(+). Its pathway is cofactor metabolism; pyridoxal 5'-phosphate salvage; pyridoxal 5'-phosphate from pyridoxal: step 1/1. In terms of biological role, pyridoxal kinase involved in the salvage pathway of pyridoxal 5'-phosphate (PLP). Catalyzes the phosphorylation of pyridoxal to PLP. The protein is Pyridoxal kinase PdxY of Pseudomonas putida (strain ATCC 47054 / DSM 6125 / CFBP 8728 / NCIMB 11950 / KT2440).